Here is a 139-residue protein sequence, read N- to C-terminus: ATP synthase epsilon chain (139 aa).

Belongs to the ATPase epsilon chain family. As to quaternary structure, F-type ATPases have 2 components, CF(1) - the catalytic core - and CF(0) - the membrane proton channel. CF(1) has five subunits: alpha(3), beta(3), gamma(1), delta(1), epsilon(1). CF(0) has three main subunits: a, b and c.

Its subcellular location is the cell membrane. Produces ATP from ADP in the presence of a proton gradient across the membrane. This is ATP synthase epsilon chain from Ligilactobacillus salivarius (strain UCC118) (Lactobacillus salivarius).